A 256-amino-acid polypeptide reads, in one-letter code: Probable aquaporin TIP4-2 (256 aa).

5 consecutive transmembrane segments (helical) span residues 25–45 (AVAG…ASTI), 59–79 (AVTA…TAGF), 86–108 (LNPA…SALY), 146–166 (GVAA…ATIL), and 178–198 (PLLT…LTGA). Residues 87-89 (NPA) carry the NPA 1 motif. The short motif at 201–203 (NPA) is the NPA 2 element. The chain crosses the membrane as a helical span at residues 220–240 (VYWVGPLAGGPLAVVAYELLF).

Belongs to the MIP/aquaporin (TC 1.A.8) family. TIP (TC 1.A.8.10) subfamily. As to expression, expressed in roots, leaves and anthers.

The protein resides in the vacuole membrane. Functionally, aquaporins facilitate the transport of water and small neutral solutes across cell membranes. May be involved in transport from the vacuolar compartment to the cytoplasm. The polypeptide is Probable aquaporin TIP4-2 (TIP4-2) (Oryza sativa subsp. japonica (Rice)).